The following is a 340-amino-acid chain: Phosphate acyltransferase (340 aa).

It belongs to the PlsX family. As to quaternary structure, homodimer. Probably interacts with PlsY.

The protein resides in the cytoplasm. The catalysed reaction is a fatty acyl-[ACP] + phosphate = an acyl phosphate + holo-[ACP]. It participates in lipid metabolism; phospholipid metabolism. In terms of biological role, catalyzes the reversible formation of acyl-phosphate (acyl-PO(4)) from acyl-[acyl-carrier-protein] (acyl-ACP). This enzyme utilizes acyl-ACP as fatty acyl donor, but not acyl-CoA. In Pseudomonas syringae pv. syringae (strain B728a), this protein is Phosphate acyltransferase.